The following is a 481-amino-acid chain: Threonine synthase (481 aa).

Lys118 carries the post-translational modification N6-(pyridoxal phosphate)lysine.

The protein belongs to the threonine synthase family. As to quaternary structure, monomer. It depends on pyridoxal 5'-phosphate as a cofactor.

The catalysed reaction is O-phospho-L-homoserine + H2O = L-threonine + phosphate. Its pathway is amino-acid biosynthesis; L-threonine biosynthesis; L-threonine from L-aspartate: step 5/5. In terms of biological role, catalyzes the gamma-elimination of phosphate from L-phosphohomoserine and the beta-addition of water to produce L-threonine. This Corynebacterium glutamicum (strain ATCC 13032 / DSM 20300 / JCM 1318 / BCRC 11384 / CCUG 27702 / LMG 3730 / NBRC 12168 / NCIMB 10025 / NRRL B-2784 / 534) protein is Threonine synthase (thrC).